Here is a 154-residue protein sequence, read N- to C-terminus: Small ribosomal subunit protein bS6 (154 aa).

Residues 107-154 (KSDDRERGFRGPKPPGRFESGRKRGYDDREEFRARAGGDDDDRGLDQE) form a disordered region. The span at 125–154 (ESGRKRGYDDREEFRARAGGDDDDRGLDQE) shows a compositional bias: basic and acidic residues.

Belongs to the bacterial ribosomal protein bS6 family.

Binds together with bS18 to 16S ribosomal RNA. The polypeptide is Small ribosomal subunit protein bS6 (Granulibacter bethesdensis (strain ATCC BAA-1260 / CGDNIH1)).